A 535-amino-acid polypeptide reads, in one-letter code: GMP synthase [glutamine-hydrolyzing] (535 aa).

One can recognise a Glutamine amidotransferase type-1 domain in the interval 4-210; sequence KILILDFGSQ…VHEICKCKPD (207 aa). Cys85 acts as the Nucleophile in catalysis. Active-site residues include His184 and Glu186. The 193-residue stretch at 211 to 403 folds into the GMPS ATP-PPase domain; it reads WVMGDYIAEA…LGLPREMVYR (193 aa). Residue 238 to 244 participates in ATP binding; sequence SGGVDSS.

In terms of assembly, homodimer.

It carries out the reaction XMP + L-glutamine + ATP + H2O = GMP + L-glutamate + AMP + diphosphate + 2 H(+). Its pathway is purine metabolism; GMP biosynthesis; GMP from XMP (L-Gln route): step 1/1. Its function is as follows. Catalyzes the synthesis of GMP from XMP. The chain is GMP synthase [glutamine-hydrolyzing] from Polynucleobacter necessarius subsp. necessarius (strain STIR1).